Here is a 304-residue protein sequence, read N- to C-terminus: Probable HTH-type transcriptional regulator LgoR (304 aa).

The region spanning 1-70 (MSRSQNLRHN…VGNDYVIARK (70 aa)) is the HTH gntR-type domain. A DNA-binding region (H-T-H motif) is located at residues 31-50 (QSALAEMYNISRTTVRHILS).

Functionally, may be a positive transcriptional regulator for lgoD and/or lgoT. Is essential for growth on L-galactonate as the sole carbon source. In Escherichia coli (strain K12), this protein is Probable HTH-type transcriptional regulator LgoR (lgoR).